A 294-amino-acid chain; its full sequence is Probable WRKY transcription factor 70 (294 aa).

Residues 72–94 (SQNASCDNDGKFEDSGDSRKRLG) form a disordered region. Residues 79 to 91 (NDGKFEDSGDSRK) are compositionally biased toward basic and acidic residues. A Nuclear localization signal motif is present at residues 90 to 97 (RKRLGPVK). The segment at residues 114–182 (IESTILEDAF…YIGNHTCNTN (69 aa)) is a DNA-binding region (WRKY). The segment at 201-229 (SEDHKSPSLSTSMKEEDNPHRHHGSSTEN) is disordered.

This sequence belongs to the WRKY group III family. Interacts with WRKY30. Binds to BZR2/BES1 to cooperatively regulate the expression of target genes. Binds to unmodified (i.e. not sumoylated) NPR1. Post-translationally, phosphorylated and destabilized by ASK7/BIN2. As to expression, expressed in leaves and flowers.

Its subcellular location is the nucleus. Transcription factor involved in senescence, biotic and abiotic stress responses by modulating various phytohormones signaling pathways. Interacts specifically with the W box (5'-(T)TGAC[CT]-3'), a frequently occurring elicitor-responsive cis-acting element. Binds to the 5'-[CT]GACTTTT-3' motif in promoters of target genes to induce their expression. Binding to the W-box element of PR-1 promoter is mediated by not-sumoylated NPR1 in the absence of salicylic acid. Plays an important but not indispensable role in jasmonate and salicylic acid signaling. Positively regulates the salicylic acid (SA)-mediated signal pathway, but negatively the jasmonic acid (JA)-mediated signal pathway, thus determining the balance between these mutually antagonistic pathways. Together with WRKY46, WRKY53 and WRKY54, prevents defense response to the necrotrophic pathogens P.carotovorum and B.cinerea, but promotes defense responses (including SA-induced pathogenesis-related (PR) genes expression) against biotrophic/hemibiotrophic SA-monitored pathogens (e.g. P.syringae, E.carotovora subsp. carotovora SCC3193 and E.cichoracearum), probably by regulating negatively the JA/ET and positively the SA signaling pathways. Contributes to the suppression of jasmonic acid (MeJA)-induced expression of JA-responsive genes (e.g. PDF1.2). Promotes susceptibility to JA-monitored pathogens (e.g. A.brassicicola), probably by facilitating SA-controlled suppression of JA-mediated defense. Represses the biosynthesis of the phytoalexin camalexin and indol-3-ylmethyl glucosinolate (IGS). Represses both SA and JA/ethylene (ET) mediated defense marker genes expression. Negative regulator of SA biosynthesis. Negative regulator of EDS1-dependent defense against E.amylovora. Required for RPP4-mediated disease resistance and basal defense against H.parasitica, probably via late up-regulation (LURP) of resistance genes (e.g. CML10/CaBP22 and LURP1). Probably involved in defense responses toward insects (e.g. P.xylostella and B.brassicae). Together with WRKY54, negative regulator of developmental senescence, probably via the regulation of several senescence-associated markers genes. Together with WRKY46 and WRKY54, promotes brassinosteroid (BR)-regulated plant growth but prevent drought response by modulating gene expression. In collaboration with WRKY54, prevents stomatal closure and, consequently, osmotic stress tolerance. Regulates rhizobacterium B.cereus AR156-induced systemic resistance (ISR) to P.syringae pv. tomato DC3000. The sequence is that of Probable WRKY transcription factor 70 from Arabidopsis thaliana (Mouse-ear cress).